A 130-amino-acid polypeptide reads, in one-letter code: MAAPVKKTGSKKSKKNVPNGVVHIQSTFNNTIVSITDTSGHVISWSSAGASGFKGARKGTPFAAQTAAEAAAKRALDQGMRQIKVLVRGPGSGRETAIRALQVAGLEITLIRDVTPLPHNGCRRPKRRRV.

It belongs to the universal ribosomal protein uS11 family. In terms of assembly, part of the 30S ribosomal subunit. Interacts with proteins S7 and S18. Binds to IF-3.

Its function is as follows. Located on the platform of the 30S subunit, it bridges several disparate RNA helices of the 16S rRNA. Forms part of the Shine-Dalgarno cleft in the 70S ribosome. This Prochlorococcus marinus subsp. pastoris (strain CCMP1986 / NIES-2087 / MED4) protein is Small ribosomal subunit protein uS11.